A 182-amino-acid chain; its full sequence is Ribosome maturation factor RimM (182 aa).

In terms of domain architecture, PRC barrel spans 102-182 (EEGDYYWKDL…SIEVDWDPGF (81 aa)).

This sequence belongs to the RimM family. In terms of assembly, binds ribosomal protein uS19.

It is found in the cytoplasm. Its function is as follows. An accessory protein needed during the final step in the assembly of 30S ribosomal subunit, possibly for assembly of the head region. Essential for efficient processing of 16S rRNA. May be needed both before and after RbfA during the maturation of 16S rRNA. It has affinity for free ribosomal 30S subunits but not for 70S ribosomes. The polypeptide is Ribosome maturation factor RimM (Escherichia fergusonii (strain ATCC 35469 / DSM 13698 / CCUG 18766 / IAM 14443 / JCM 21226 / LMG 7866 / NBRC 102419 / NCTC 12128 / CDC 0568-73)).